Here is a 292-residue protein sequence, read N- to C-terminus: Shikimate dehydrogenase (NADP(+)) (292 aa).

Shikimate contacts are provided by residues 25–27 (SKS) and threonine 72. Lysine 76 (proton acceptor) is an active-site residue. Shikimate contacts are provided by asparagine 97 and aspartate 113. NADP(+) contacts are provided by residues 137–141 (GAGGA), 161–166 (NRTQSK), and methionine 230. Shikimate is bound at residue tyrosine 232. Glycine 254 lines the NADP(+) pocket.

The protein belongs to the shikimate dehydrogenase family. Homodimer.

The catalysed reaction is shikimate + NADP(+) = 3-dehydroshikimate + NADPH + H(+). It functions in the pathway metabolic intermediate biosynthesis; chorismate biosynthesis; chorismate from D-erythrose 4-phosphate and phosphoenolpyruvate: step 4/7. In terms of biological role, involved in the biosynthesis of the chorismate, which leads to the biosynthesis of aromatic amino acids. Catalyzes the reversible NADPH linked reduction of 3-dehydroshikimate (DHSA) to yield shikimate (SA). The protein is Shikimate dehydrogenase (NADP(+)) of Shewanella sp. (strain MR-7).